Here is a 110-residue protein sequence, read N- to C-terminus: UPF0145 protein BLD_1357 (110 aa).

Belongs to the UPF0145 family.

The sequence is that of UPF0145 protein BLD_1357 from Bifidobacterium longum (strain DJO10A).